A 263-amino-acid chain; its full sequence is Coiled-coil domain-containing protein 172 (263 aa).

A coiled-coil region spans residues 13-191; the sequence is TEHQAEESRR…LKVLKDEETE (179 aa).

It belongs to the CCDC172 family. May interact with TEKT2. Detected in spermatozoa (at protein level). Predominantly expressed in testis and in spermatozoa from the caput and corpus epididymis.

It is found in the cytoplasm. It localises to the cell projection. The protein localises to the cilium. The protein is Coiled-coil domain-containing protein 172 (Ccdc172) of Rattus norvegicus (Rat).